The sequence spans 909 residues: Protein translocase subunit SecA (909 aa).

Residues glutamine 87, 105–109, and aspartate 507 contribute to the ATP site; that span reads GEGKT. 2 disordered regions span residues 567-586 and 859-909; these read RRID…PGSS and YSEA…GKLD. Positions 865-889 are enriched in basic and acidic residues; that stretch reads EHQSVTEGHEAKQQPFVRKSDKIGR. 4 residues coordinate Zn(2+): cysteine 893, cysteine 895, cysteine 904, and histidine 905. Residues 899-909 are compositionally biased toward basic residues; that stretch reads RKYKQCHGKLD.

Belongs to the SecA family. In terms of assembly, monomer and homodimer. Part of the essential Sec protein translocation apparatus which comprises SecA, SecYEG and auxiliary proteins SecDF-YajC and YidC. Zn(2+) serves as cofactor.

Its subcellular location is the cell inner membrane. The protein resides in the cytoplasm. The catalysed reaction is ATP + H2O + cellular proteinSide 1 = ADP + phosphate + cellular proteinSide 2.. Functionally, part of the Sec protein translocase complex. Interacts with the SecYEG preprotein conducting channel. Has a central role in coupling the hydrolysis of ATP to the transfer of proteins into and across the cell membrane, serving both as a receptor for the preprotein-SecB complex and as an ATP-driven molecular motor driving the stepwise translocation of polypeptide chains across the membrane. In Nitrosomonas eutropha (strain DSM 101675 / C91 / Nm57), this protein is Protein translocase subunit SecA.